A 90-amino-acid chain; its full sequence is DNA-binding protein HU-beta (90 aa).

This sequence belongs to the bacterial histone-like protein family. As to quaternary structure, heterodimer of an alpha and a beta chain.

In terms of biological role, histone-like DNA-binding protein which is capable of wrapping DNA to stabilize it, and thus to prevent its denaturation under extreme environmental conditions. The protein is DNA-binding protein HU-beta (hupB) of Pseudomonas aeruginosa (strain ATCC 15692 / DSM 22644 / CIP 104116 / JCM 14847 / LMG 12228 / 1C / PRS 101 / PAO1).